We begin with the raw amino-acid sequence, 207 residues long: FMN-dependent NADH:quinone oxidoreductase 2 (207 aa).

Residues serine 10, 16 to 18 (SIS), 96 to 99 (MYNL), and 141 to 144 (SRGG) contribute to the FMN site.

It belongs to the azoreductase type 1 family. Homodimer. FMN is required as a cofactor.

It catalyses the reaction 2 a quinone + NADH + H(+) = 2 a 1,4-benzosemiquinone + NAD(+). The catalysed reaction is N,N-dimethyl-1,4-phenylenediamine + anthranilate + 2 NAD(+) = 2-(4-dimethylaminophenyl)diazenylbenzoate + 2 NADH + 2 H(+). Functionally, quinone reductase that provides resistance to thiol-specific stress caused by electrophilic quinones. Its function is as follows. Also exhibits azoreductase activity. Catalyzes the reductive cleavage of the azo bond in aromatic azo compounds to the corresponding amines. This is FMN-dependent NADH:quinone oxidoreductase 2 from Trichormus variabilis (strain ATCC 29413 / PCC 7937) (Anabaena variabilis).